The primary structure comprises 640 residues: MPDLEKDMQKKEKDSRSKDEPAVPKLPVPPLQQTLQMYLQCMKHLVPEEQFRKTKSIVEQFGVAGGLGESLQLILEERREETTNWVFNYWLDDMYLNNRLALPVNSSPAIIFARQNFKDVNDQLRFAANLISGVQDYKALLDSHALPVDFARGQLSGQPLCMKQYYGLFSSYRLPGHTKDTLVAQKSCVMPEPEHIIVACNNQLFVLDVGINFRRLSEGDLFTQLRKIAKMAENEEEMLPPIGLLTTDGRTEWAEARTILMKDSTNRDSLDMIERCICLVCLDGTSGVELNDTNMALQLLHGGGYHKNGANRWYDKPMQFVVGRDGVCGTVCEHSPFDGIVLVQCTEHLLKHMKESSKKLLRADSVSELPAPRRLRWKCSPEIQAHLASSAEKLQRIVKNLDFIAYKFVNYGKEFIKKQKTSPDAYIQVALQLAFYRCHRRLVPTYESASIRRFDEGRVDNIRSATAEAFAFVKAMIDDKPALSDSEKMQRFKDAIAAQTNYTILAITGMAIDNHLLGLREVAREHFKELPEIFTDETYLTSNRFILSTSQVPTPMEMFCCYGPVVPNGYGACYNPQPEHILFCISSFKDCKETSSDMLAKAVEESLLEIRDLCNKCSSSTAKSLAKQEEATQLRSDRKL.

Basic and acidic residues predominate over residues 1–22; sequence MPDLEKDMQKKEKDSRSKDEPA. The segment at 1–28 is disordered; it reads MPDLEKDMQKKEKDSRSKDEPAVPKLPV. His334 serves as the catalytic Proton acceptor. Residues 412-424, Ser450, and Gln551 each bind CoA; that span reads GKEF…TSPD.

The protein belongs to the carnitine/choline acetyltransferase family. As to expression, detected in brain and in embryonic retina.

It carries out the reaction choline + acetyl-CoA = acetylcholine + CoA. In terms of biological role, catalyzes the reversible synthesis of acetylcholine (ACh) from acetyl CoA and choline at cholinergic synapses. The protein is Choline O-acetyltransferase (CHAT) of Gallus gallus (Chicken).